Consider the following 185-residue polypeptide: MQRLPGVGPKTAQRLALHILKRPESEVEALAQALVEAKKQIGLCSVCFHLSSEPVCEICRNPNRENNTICVVADSRDVIALEKTREFKGKYHVLGGVISPMDGIGPEQLTITPLLRRVSQQQPKEVILAISPSVEGETTTLYVGQLLKPFTKVTRIAFGLPVGGDLEYADEITLARALEGRRELD.

A C4-type zinc finger spans residues 44 to 59 (CSVCFHLSSEPVCEIC). Residues 67 to 161 (NTICVVADSR…KVTRIAFGLP (95 aa)) form the Toprim domain.

The protein belongs to the RecR family.

Its function is as follows. May play a role in DNA repair. It seems to be involved in an RecBC-independent recombinational process of DNA repair. It may act with RecF and RecO. This chain is Recombination protein RecR, found in Trichormus variabilis (strain ATCC 29413 / PCC 7937) (Anabaena variabilis).